A 133-amino-acid polypeptide reads, in one-letter code: Small ribosomal subunit protein uS8 (133 aa).

The protein belongs to the universal ribosomal protein uS8 family. As to quaternary structure, part of the 30S ribosomal subunit. Contacts proteins S5 and S12.

Functionally, one of the primary rRNA binding proteins, it binds directly to 16S rRNA central domain where it helps coordinate assembly of the platform of the 30S subunit. This is Small ribosomal subunit protein uS8 from Chlamydia pneumoniae (Chlamydophila pneumoniae).